The sequence spans 127 residues: Phosphoribosyl-AMP cyclohydrolase (127 aa).

D96 lines the Mg(2+) pocket. Residue C97 participates in Zn(2+) binding. The Mg(2+) site is built by D98 and D100. Residues C113 and C120 each coordinate Zn(2+).

This sequence belongs to the PRA-CH family. Homodimer. Requires Mg(2+) as cofactor. The cofactor is Zn(2+).

The protein localises to the cytoplasm. The enzyme catalyses 1-(5-phospho-beta-D-ribosyl)-5'-AMP + H2O = 1-(5-phospho-beta-D-ribosyl)-5-[(5-phospho-beta-D-ribosylamino)methylideneamino]imidazole-4-carboxamide. It functions in the pathway amino-acid biosynthesis; L-histidine biosynthesis; L-histidine from 5-phospho-alpha-D-ribose 1-diphosphate: step 3/9. Catalyzes the hydrolysis of the adenine ring of phosphoribosyl-AMP. In Corynebacterium jeikeium (strain K411), this protein is Phosphoribosyl-AMP cyclohydrolase.